The primary structure comprises 228 residues: Uracil-DNA glycosylase (228 aa).

Asp64 serves as the catalytic Proton acceptor.

It belongs to the uracil-DNA glycosylase (UDG) superfamily. UNG family.

Its subcellular location is the cytoplasm. The enzyme catalyses Hydrolyzes single-stranded DNA or mismatched double-stranded DNA and polynucleotides, releasing free uracil.. In terms of biological role, excises uracil residues from the DNA which can arise as a result of misincorporation of dUMP residues by DNA polymerase or due to deamination of cytosine. In Pectobacterium carotovorum subsp. carotovorum (strain PC1), this protein is Uracil-DNA glycosylase.